Consider the following 291-residue polypeptide: Elongation factor Ts (291 aa).

An involved in Mg(2+) ion dislocation from EF-Tu region spans residues 84-87 (TDFV).

It belongs to the EF-Ts family.

It localises to the cytoplasm. Associates with the EF-Tu.GDP complex and induces the exchange of GDP to GTP. It remains bound to the aminoacyl-tRNA.EF-Tu.GTP complex up to the GTP hydrolysis stage on the ribosome. The sequence is that of Elongation factor Ts from Bifidobacterium adolescentis (strain ATCC 15703 / DSM 20083 / NCTC 11814 / E194a).